The sequence spans 194 residues: Ribosome maturation factor RimP (194 aa).

Belongs to the RimP family.

Its subcellular location is the cytoplasm. Its function is as follows. Required for maturation of 30S ribosomal subunits. The polypeptide is Ribosome maturation factor RimP (Jannaschia sp. (strain CCS1)).